The primary structure comprises 831 residues: Molybdenum cofactor sulfurase (831 aa).

Residue Lys262 is modified to N6-(pyridoxal phosphate)lysine. Cys422 is a catalytic residue. The region spanning 651-823 (AWLSEFLGKP…LSIGSHVIPK (173 aa)) is the MOSC domain.

It belongs to the class-V pyridoxal-phosphate-dependent aminotransferase family. MOCOS subfamily. The cofactor is pyridoxal 5'-phosphate.

The catalysed reaction is Mo-molybdopterin + L-cysteine + AH2 = thio-Mo-molybdopterin + L-alanine + A + H2O. The protein operates within cofactor biosynthesis; molybdopterin biosynthesis. Its function is as follows. Sulfurates the molybdenum cofactor. Sulfation of molybdenum is essential for xanthine dehydrogenase (XDH) and aldehyde oxidase (ADO) enzymes in which molybdenum cofactor is liganded by 1 oxygen and 1 sulfur atom in active form. The chain is Molybdenum cofactor sulfurase (mocos) from Danio rerio (Zebrafish).